The following is a 274-amino-acid chain: Cytochrome c oxidase subunit 3 (274 aa).

At Met1–Pro15 the chain is on the mitochondrial matrix side. Residues Trp16–Trp34 traverse the membrane as a helical segment. Topologically, residues Phe35–Ser40 are mitochondrial intermembrane. Residues Met41–Thr66 traverse the membrane as a helical segment. Topologically, residues Phe67–Thr72 are mitochondrial matrix. A helical membrane pass occupies residues Ser73–Ser105. The Mitochondrial intermembrane portion of the chain corresponds to Leu106–Glu128. Residues Val129–Met152 traverse the membrane as a helical segment. At Glu153–Asn155 the chain is on the mitochondrial matrix side. The helical transmembrane segment at Arg156 to Glu183 threads the bilayer. At Thr184–Asp190 the chain is on the mitochondrial intermembrane side. A helical membrane pass occupies residues Gly191–Leu223. At Ser224–His232 the chain is on the mitochondrial matrix side. Residues Phe233–Ile256 traverse the membrane as a helical segment. At Tyr257–Asn274 the chain is on the mitochondrial intermembrane side.

This sequence belongs to the cytochrome c oxidase subunit 3 family. In terms of assembly, component of the cytochrome c oxidase (complex IV, CIV), a multisubunit enzyme composed of 14 subunits. The complex is composed of a catalytic core of 3 subunits MT-CO1, MT-CO2 and MT-CO3, encoded in the mitochondrial DNA, and 11 supernumerary subunits COX4I, COX5A, COX5B, COX6A, COX6B, COX6C, COX7A, COX7B, COX7C, COX8 and NDUFA4, which are encoded in the nuclear genome. The complex exists as a monomer or a dimer and forms supercomplexes (SCs) in the inner mitochondrial membrane with NADH-ubiquinone oxidoreductase (complex I, CI) and ubiquinol-cytochrome c oxidoreductase (cytochrome b-c1 complex, complex III, CIII), resulting in different assemblies (supercomplex SCI(1)III(2)IV(1) and megacomplex MCI(2)III(2)IV(2)).

Its subcellular location is the mitochondrion inner membrane. It carries out the reaction 4 Fe(II)-[cytochrome c] + O2 + 8 H(+)(in) = 4 Fe(III)-[cytochrome c] + 2 H2O + 4 H(+)(out). Functionally, component of the cytochrome c oxidase, the last enzyme in the mitochondrial electron transport chain which drives oxidative phosphorylation. The respiratory chain contains 3 multisubunit complexes succinate dehydrogenase (complex II, CII), ubiquinol-cytochrome c oxidoreductase (cytochrome b-c1 complex, complex III, CIII) and cytochrome c oxidase (complex IV, CIV), that cooperate to transfer electrons derived from NADH and succinate to molecular oxygen, creating an electrochemical gradient over the inner membrane that drives transmembrane transport and the ATP synthase. Cytochrome c oxidase is the component of the respiratory chain that catalyzes the reduction of oxygen to water. Electrons originating from reduced cytochrome c in the intermembrane space (IMS) are transferred via the dinuclear copper A center (CU(A)) of subunit 2 and heme A of subunit 1 to the active site in subunit 1, a binuclear center (BNC) formed by heme A3 and copper B (CU(B)). The BNC reduces molecular oxygen to 2 water molecules using 4 electrons from cytochrome c in the IMS and 4 protons from the mitochondrial matrix. In Lemur catta (Ring-tailed lemur), this protein is Cytochrome c oxidase subunit 3 (MT-CO3).